We begin with the raw amino-acid sequence, 283 residues long: ATP phosphoribosyltransferase (283 aa).

This sequence belongs to the ATP phosphoribosyltransferase family. Long subfamily. It depends on Mg(2+) as a cofactor.

The protein resides in the cytoplasm. The enzyme catalyses 1-(5-phospho-beta-D-ribosyl)-ATP + diphosphate = 5-phospho-alpha-D-ribose 1-diphosphate + ATP. Its pathway is amino-acid biosynthesis; L-histidine biosynthesis; L-histidine from 5-phospho-alpha-D-ribose 1-diphosphate: step 1/9. Its activity is regulated as follows. Feedback inhibited by histidine. Its function is as follows. Catalyzes the condensation of ATP and 5-phosphoribose 1-diphosphate to form N'-(5'-phosphoribosyl)-ATP (PR-ATP). Has a crucial role in the pathway because the rate of histidine biosynthesis seems to be controlled primarily by regulation of HisG enzymatic activity. The protein is ATP phosphoribosyltransferase of Methanopyrus kandleri (strain AV19 / DSM 6324 / JCM 9639 / NBRC 100938).